Consider the following 845-residue polypeptide: Beta-mannosidase B (845 aa).

Positions 1–20 are disordered; it reads MSKLQQFPLSKGWSFRDSED. N252 carries an N-linked (GlcNAc...) asparagine glycan. E432 functions as the Proton donor in the catalytic mechanism. N-linked (GlcNAc...) asparagine glycosylation is found at N717 and N723.

This sequence belongs to the glycosyl hydrolase 2 family. Beta-mannosidase B subfamily.

It catalyses the reaction Hydrolysis of terminal, non-reducing beta-D-mannose residues in beta-D-mannosides.. The protein operates within glycan metabolism; N-glycan degradation. Its function is as follows. Exoglycosidase that cleaves the single beta-linked mannose residue from the non-reducing end of beta-mannosidic oligosaccharides of various complexity and length. Prefers mannobiose over mannotriose and has no activity against polymeric mannan. Is also severely restricted by galactosyl substitutions at the +1 subsite. The protein is Beta-mannosidase B (mndB) of Neosartorya fischeri (strain ATCC 1020 / DSM 3700 / CBS 544.65 / FGSC A1164 / JCM 1740 / NRRL 181 / WB 181) (Aspergillus fischerianus).